The following is a 424-amino-acid chain: MKQLLVLILSLYTTLAWTVLEVTILKQDENAFPIVISDFSVIGDANQGKIIAHVIRNNFNRSGEFSASSVNYVINNKPNFDKWKAKKIEAIVLGKLEKISKKVFNVEIELLDVFSKKILYKDKFVVHNRGIRRIAHYLSDQIYHVLLGEKGSFDTRLAYISVTNKGKGEREYRLEISDSDAQNPQTILKSKKPILSPVWSPDQNKIAYVSFKNARSEVFIQYPFVRRKTQKLPYFDGIASAPSWHPNGKNLLLTLSKNGNKDIYSYQLSSKKLTRLTTDVGIDTEASYSSEGDKIVFTSNRSGQVQVYIKDLKTNKINRATFKGRYNAKAVFSPDDKSLAMVHRVGKDYRIALLDIATKNLTIMTNNQLDESPFFSPNGSMIIFATNKGSSSVLSVVSILGRQTFELASKAGEVREPNWSHYLK.

Residues 1–16 (MKQLLVLILSLYTTLA) form the signal peptide.

Belongs to the TolB family. In terms of assembly, the Tol-Pal system is composed of five core proteins: the inner membrane proteins TolA, TolQ and TolR, the periplasmic protein TolB and the outer membrane protein Pal. They form a network linking the inner and outer membranes and the peptidoglycan layer.

It is found in the periplasm. Functionally, part of the Tol-Pal system, which plays a role in outer membrane invagination during cell division and is important for maintaining outer membrane integrity. This Ruthia magnifica subsp. Calyptogena magnifica protein is Tol-Pal system protein TolB.